A 37-amino-acid chain; its full sequence is Large ribosomal subunit protein bL36 (37 aa).

Residues cysteine 11, cysteine 14, cysteine 27, and histidine 32 each coordinate Zn(2+).

This sequence belongs to the bacterial ribosomal protein bL36 family. Part of the 50S ribosomal subunit. Zn(2+) serves as cofactor.

Binds the 23S rRNA. This is Large ribosomal subunit protein bL36 (rpmJ) from Deinococcus radiodurans (strain ATCC 13939 / DSM 20539 / JCM 16871 / CCUG 27074 / LMG 4051 / NBRC 15346 / NCIMB 9279 / VKM B-1422 / R1).